We begin with the raw amino-acid sequence, 455 residues long: Squamosa promoter-binding-like protein 16 (455 aa).

The segment at 115 to 192 adopts an SBP-type zinc-finger fold; it reads CPSCAVDGCK…DGHNRRRRKP (78 aa). Positions 118, 123, 140, 143, 159, 162, 166, and 178 each coordinate Zn(2+). The short motif at 175–191 is the Bipartite nuclear localization signal element; the sequence is KRSCRKRLDGHNRRRRK. Positions 182 to 204 are disordered; the sequence is LDGHNRRRRKPQPDPMNSASYLA.

In terms of tissue distribution, expressed in young panicles.

It localises to the nucleus. Its function is as follows. Trans-acting factor that binds specifically to the consensus nucleotide sequence 5'-TNCGTACAA-3'. May be involved in panicle development. The polypeptide is Squamosa promoter-binding-like protein 16 (SPL16) (Oryza sativa subsp. japonica (Rice)).